The following is a 110-amino-acid chain: UPF0251 protein PYRAB12660 (110 aa).

This sequence belongs to the UPF0251 family.

This Pyrococcus abyssi (strain GE5 / Orsay) protein is UPF0251 protein PYRAB12660.